We begin with the raw amino-acid sequence, 431 residues long: tRNA(Ile)-lysidine synthase (431 aa).

25–30 (SGGPDS) provides a ligand contact to ATP.

Belongs to the tRNA(Ile)-lysidine synthase family.

It localises to the cytoplasm. The enzyme catalyses cytidine(34) in tRNA(Ile2) + L-lysine + ATP = lysidine(34) in tRNA(Ile2) + AMP + diphosphate + H(+). Functionally, ligates lysine onto the cytidine present at position 34 of the AUA codon-specific tRNA(Ile) that contains the anticodon CAU, in an ATP-dependent manner. Cytidine is converted to lysidine, thus changing the amino acid specificity of the tRNA from methionine to isoleucine. This chain is tRNA(Ile)-lysidine synthase, found in Lactobacillus johnsonii (strain CNCM I-12250 / La1 / NCC 533).